A 209-amino-acid polypeptide reads, in one-letter code: LexA repressor (209 aa).

The H-T-H motif DNA-binding region spans V32–A52. Active-site for autocatalytic cleavage activity residues include S131 and K169.

It belongs to the peptidase S24 family. In terms of assembly, homodimer.

It carries out the reaction Hydrolysis of Ala-|-Gly bond in repressor LexA.. Functionally, represses a number of genes involved in the response to DNA damage (SOS response), including recA and lexA. In the presence of single-stranded DNA, RecA interacts with LexA causing an autocatalytic cleavage which disrupts the DNA-binding part of LexA, leading to derepression of the SOS regulon and eventually DNA repair. This chain is LexA repressor, found in Enterococcus faecalis (strain ATCC 700802 / V583).